The sequence spans 339 residues: Phenylalanine--tRNA ligase alpha subunit (339 aa).

Glu250 contributes to the Mg(2+) binding site.

It belongs to the class-II aminoacyl-tRNA synthetase family. Phe-tRNA synthetase alpha subunit type 1 subfamily. As to quaternary structure, tetramer of two alpha and two beta subunits. The cofactor is Mg(2+).

It localises to the cytoplasm. It carries out the reaction tRNA(Phe) + L-phenylalanine + ATP = L-phenylalanyl-tRNA(Phe) + AMP + diphosphate + H(+). In Parabacteroides distasonis (strain ATCC 8503 / DSM 20701 / CIP 104284 / JCM 5825 / NCTC 11152), this protein is Phenylalanine--tRNA ligase alpha subunit.